The sequence spans 81 residues: Acyl carrier protein (81 aa).

Positions 2-80 (ASKEEILAGL…DAVDFIDGAQ (79 aa)) constitute a Carrier domain. Ser40 carries the O-(pantetheine 4'-phosphoryl)serine modification.

It belongs to the acyl carrier protein (ACP) family. Post-translationally, 4'-phosphopantetheine is transferred from CoA to a specific serine of apo-ACP by AcpS. This modification is essential for activity because fatty acids are bound in thioester linkage to the sulfhydryl of the prosthetic group.

The protein localises to the cytoplasm. It participates in lipid metabolism; fatty acid biosynthesis. Carrier of the growing fatty acid chain in fatty acid biosynthesis. The protein is Acyl carrier protein of Micrococcus luteus (strain ATCC 4698 / DSM 20030 / JCM 1464 / CCM 169 / CCUG 5858 / IAM 1056 / NBRC 3333 / NCIMB 9278 / NCTC 2665 / VKM Ac-2230) (Micrococcus lysodeikticus).